Here is a 137-residue protein sequence, read N- to C-terminus: Large ribosomal subunit protein uL16 (137 aa).

This sequence belongs to the universal ribosomal protein uL16 family. Part of the 50S ribosomal subunit.

Functionally, binds 23S rRNA and is also seen to make contacts with the A and possibly P site tRNAs. This chain is Large ribosomal subunit protein uL16, found in Thioalkalivibrio sulfidiphilus (strain HL-EbGR7).